The sequence spans 103 residues: N(4)-acetylcytidine amidohydrolase (103 aa).

Residues 6–92 enclose the ASCH domain; it reads TFFERFEPGI…VIQEIYPGLE (87 aa). Lysine 20 functions as the Proton acceptor in the catalytic mechanism. Residue threonine 23 is the Nucleophile of the active site. Catalysis depends on glutamate 73, which acts as the Proton donor.

The protein belongs to the N(4)-acetylcytidine amidohydrolase family.

It catalyses the reaction N(4)-acetylcytidine + H2O = cytidine + acetate + H(+). The catalysed reaction is N(4)-acetyl-2'-deoxycytidine + H2O = 2'-deoxycytidine + acetate + H(+). It carries out the reaction N(4)-acetylcytosine + H2O = cytosine + acetate + H(+). Catalyzes the hydrolysis of N(4)-acetylcytidine (ac4C). This Shewanella sp. (strain MR-7) protein is N(4)-acetylcytidine amidohydrolase.